The following is a 677-amino-acid chain: DNA ligase (677 aa).

NAD(+)-binding positions include 32 to 36 (DSEYD), 81 to 82 (SL), and glutamate 112. Lysine 114 functions as the N6-AMP-lysine intermediate in the catalytic mechanism. Arginine 135, glutamate 171, lysine 288, and lysine 312 together coordinate NAD(+). Residues cysteine 416, cysteine 419, cysteine 434, and cysteine 439 each coordinate Zn(2+). Residues 598 to 677 (YKPLPLSGVE…QEFINMLEQS (80 aa)) form the BRCT domain.

The protein belongs to the NAD-dependent DNA ligase family. LigA subfamily. It depends on Mg(2+) as a cofactor. Mn(2+) is required as a cofactor.

The enzyme catalyses NAD(+) + (deoxyribonucleotide)n-3'-hydroxyl + 5'-phospho-(deoxyribonucleotide)m = (deoxyribonucleotide)n+m + AMP + beta-nicotinamide D-nucleotide.. Its function is as follows. DNA ligase that catalyzes the formation of phosphodiester linkages between 5'-phosphoryl and 3'-hydroxyl groups in double-stranded DNA using NAD as a coenzyme and as the energy source for the reaction. It is essential for DNA replication and repair of damaged DNA. In Dehalococcoides mccartyi (strain ATCC BAA-2266 / KCTC 15142 / 195) (Dehalococcoides ethenogenes (strain 195)), this protein is DNA ligase.